The primary structure comprises 372 residues: NAD(P)H-quinone oxidoreductase subunit 1 (372 aa).

The next 8 helical transmembrane spans lie at 27 to 47 (VLWMPLPMLLMIIAATVGVLV), 97 to 117 (FLFTIGPALVVIPVFLSYLIV), 128 to 148 (VGAGVFLWIALSSIQPIGLLM), 176 to 196 (LALAVLAVVMMSNSLSTIDIV), 204 to 224 (ILGWNIWRQPVGFIIFWIAAL), 254 to 274 (FALFYVGSYVNLILSALLVSI), 308 to 328 (ALGITMTVLKAYLLVFTAILL), and 347 to 367 (FLLPISLVNLLVTAALKLTFP).

Belongs to the complex I subunit 1 family. In terms of assembly, NDH-1 is composed of at least 11 different subunits.

It localises to the cellular thylakoid membrane. The catalysed reaction is a plastoquinone + NADH + (n+1) H(+)(in) = a plastoquinol + NAD(+) + n H(+)(out). It catalyses the reaction a plastoquinone + NADPH + (n+1) H(+)(in) = a plastoquinol + NADP(+) + n H(+)(out). In terms of biological role, NDH-1 shuttles electrons from an unknown electron donor, via FMN and iron-sulfur (Fe-S) centers, to quinones in the respiratory and/or the photosynthetic chain. The immediate electron acceptor for the enzyme in this species is believed to be plastoquinone. Couples the redox reaction to proton translocation, and thus conserves the redox energy in a proton gradient. This Synechococcus elongatus (strain ATCC 33912 / PCC 7942 / FACHB-805) (Anacystis nidulans R2) protein is NAD(P)H-quinone oxidoreductase subunit 1.